The primary structure comprises 242 residues: Myogenic factor 6 (242 aa).

The tract at residues 30-63 (GSPLYPGSDGTLSPCQDQLPPEAGSDSSGEEHVL) is disordered. The bHLH domain maps to 93–144 (DRRKAATLRERRRLKKINEAFEALKRRTVANPNQRLPKVEILRSAISYIERL). Residues 190–210 (ASDHSRALGGSPKAGGSMVES) are disordered.

In terms of assembly, efficient DNA binding requires dimerization with another bHLH protein. As to expression, skeletal muscle.

It localises to the nucleus. Its function is as follows. Involved in muscle differentiation (myogenic factor). Induces fibroblasts to differentiate into myoblasts. Probable sequence specific DNA-binding protein. This is Myogenic factor 6 (MYF6) from Gallus gallus (Chicken).